Consider the following 244-residue polypeptide: Haloacid dehalogenase-like hydrolase domain-containing protein Sgpp (244 aa).

Asp28 serves as the catalytic Nucleophile. 3 residues coordinate Mg(2+): Asp28, Asp30, and Asp189. The active-site Proton donor is Asp30.

The protein belongs to the HAD-like hydrolase superfamily. DOG/GPP family. Requires Mg(2+) as cofactor. Ubiquitous with highest expression in flowers.

In terms of biological role, acts as a phosphosugar phosphatase on a broad range of sugar phosphate substrates with preferential activity on D-ribose-5-phosphate, 2-deoxy-D-ribose-5-phosphate, 2-deoxy-D-glucose-6-phosphate, and D-mannose-6-phosphate and with a lower activity on D-fructose-1-phosphate, D-glucose-6-phosphate, DL-glycerol-3-phosphate, and D-fructose-6-phosphate. The sequence is that of Haloacid dehalogenase-like hydrolase domain-containing protein Sgpp (SGPP) from Arabidopsis thaliana (Mouse-ear cress).